The sequence spans 916 residues: DNA ligase 1 (916 aa).

Over residues 1–10 the composition is skewed to polar residues; the sequence is MQRSIMSFFQ. The interval 1-197 is disordered; that stretch reads MQRSIMSFFQ…SPESVTLTKT (197 aa). The span at 13-43 shows a compositional bias: basic and acidic residues; sequence KEGKAKKPEKETPSSIREKEPPPKVALKERN. Phosphoserine occurs at positions 49, 51, and 65. Position 77 is a phosphothreonine (Thr-77). A compositionally biased stretch (polar residues) spans 99 to 111; it reads PENSPVFNCSSPM. Over residues 119–129 the composition is skewed to basic residues; that stretch reads PKRRTARKQLP. An N6-acetyllysine modification is found at Lys-144. Basic and acidic residues predominate over residues 153–177; sequence KEEETPKESLAEAEDIKQKEEKEGD. Over residues 185–197 the composition is skewed to polar residues; it reads PTKSPESVTLTKT. Thr-193 is subject to Phosphothreonine. Position 225 is an N6-acetyllysine (Lys-225). A phosphoserine mark is found at Ser-228 and Ser-229. Thr-232 bears the Phosphothreonine mark. Residues 236–266 are disordered; it reads PAVKTEVKQEESGTLRKEETKGTLDPANYNP. Basic and acidic residues predominate over residues 238–257; that stretch reads VKTEVKQEESGTLRKEETKG. Residues 447 to 456 are interaction with target DNA; that stretch reads RLRLGLAEQS. Glu-564 provides a ligand contact to ATP. Catalysis depends on Lys-566, which acts as the N6-AMP-lysine intermediate. The ATP site is built by Arg-571 and Glu-619. Glu-619 lines the Mg(2+) pocket. The segment at 640 to 642 is interaction with target DNA; sequence KRK. Residue Glu-718 participates in Mg(2+) binding. Positions 723 and 742 each coordinate ATP. Residue Thr-796 is modified to Phosphothreonine. Residues Ser-799, Ser-906, Ser-907, and Ser-911 each carry the phosphoserine modification. The tract at residues 879–916 is disordered; that stretch reads DKQPEQATTSNQVASLYRKQSQIQNQQSSDLDSDVEDY. A compositionally biased stretch (polar residues) spans 883 to 908; it reads EQATTSNQVASLYRKQSQIQNQQSSD.

It belongs to the ATP-dependent DNA ligase family. As to quaternary structure, interacts with PCNA. Interacts with POLB. The cofactor is Mg(2+).

The protein localises to the nucleus. It catalyses the reaction ATP + (deoxyribonucleotide)n-3'-hydroxyl + 5'-phospho-(deoxyribonucleotide)m = (deoxyribonucleotide)n+m + AMP + diphosphate.. In terms of biological role, DNA ligase that seals nicks in double-stranded during DNA repair. Also involved in DNA replication and DNA recombination. The polypeptide is DNA ligase 1 (Lig1) (Mus musculus (Mouse)).